We begin with the raw amino-acid sequence, 240 residues long: Thiopurine S-methyltransferase (240 aa).

24–35 (WKEKWVTRHISF) contacts S-adenosyl-L-methionine. At S34 the chain carries Phosphoserine. F35 provides a ligand contact to substrate. An N6-acetyllysine modification is found at K53. S-adenosyl-L-methionine is bound by residues L64, E85, 129-130 (SI), and R147.

It belongs to the class I-like SAM-binding methyltransferase superfamily. TPMT family. Monomer.

Its subcellular location is the cytoplasm. The catalysed reaction is S-adenosyl-L-methionine + a thiopurine = S-adenosyl-L-homocysteine + a thiopurine S-methylether.. It carries out the reaction mercaptopurine + S-adenosyl-L-methionine = 6-methylthiopurine + S-adenosyl-L-homocysteine + H(+). Its function is as follows. Catalyzes the S-methylation of thiopurine drugs such as 6-mercaptopurine (also called mercaptopurine, 6-MP or its brand name Purinethol) using S-adenosyl-L-methionine as the methyl donor. TPMT activity modulates the cytotoxic effects of thiopurine prodrugs. A natural substrate for this enzyme has yet to be identified. This Mus musculus (Mouse) protein is Thiopurine S-methyltransferase (Tpmt).